The sequence spans 249 residues: GTP cyclohydrolase 1 type 2 homolog (249 aa).

Histidine 64, histidine 65, aspartate 102, histidine 217, and glutamate 221 together coordinate a divalent metal cation.

This sequence belongs to the GTP cyclohydrolase I type 2/NIF3 family. As to quaternary structure, homohexamer.

This chain is GTP cyclohydrolase 1 type 2 homolog, found in Neisseria meningitidis serogroup A / serotype 4A (strain DSM 15465 / Z2491).